The primary structure comprises 377 residues: S-adenosylmethionine synthase (377 aa).

H14 provides a ligand contact to ATP. D16 provides a ligand contact to Mg(2+). E42 contacts K(+). Q98 provides a ligand contact to L-methionine. Residues 98-108 (QSADIALGIDL) are flexible loop. ATP contacts are provided by residues 162–164 (DMK), 228–229 (RF), D237, 243–244 (RK), A260, and K264. Position 237 (D237) interacts with L-methionine. K268 contributes to the L-methionine binding site.

The protein belongs to the AdoMet synthase family. In terms of assembly, homotetramer; dimer of dimers. The cofactor is Mg(2+). Requires K(+) as cofactor.

It is found in the cytoplasm. The enzyme catalyses L-methionine + ATP + H2O = S-adenosyl-L-methionine + phosphate + diphosphate. It participates in amino-acid biosynthesis; S-adenosyl-L-methionine biosynthesis; S-adenosyl-L-methionine from L-methionine: step 1/1. Functionally, catalyzes the formation of S-adenosylmethionine (AdoMet) from methionine and ATP. The overall synthetic reaction is composed of two sequential steps, AdoMet formation and the subsequent tripolyphosphate hydrolysis which occurs prior to release of AdoMet from the enzyme. The sequence is that of S-adenosylmethionine synthase from Mesoplasma florum (strain ATCC 33453 / NBRC 100688 / NCTC 11704 / L1) (Acholeplasma florum).